Here is a 236-residue protein sequence, read N- to C-terminus: 5'-methylthioadenosine/S-adenosylhomocysteine nucleosidase (236 aa).

The active-site Proton acceptor is the Glu-12. Substrate is bound by residues Gly-78, Met-153, and 174–175 (ME). Asp-198 serves as the catalytic Proton donor.

Belongs to the PNP/UDP phosphorylase family. MtnN subfamily.

The enzyme catalyses S-adenosyl-L-homocysteine + H2O = S-(5-deoxy-D-ribos-5-yl)-L-homocysteine + adenine. It catalyses the reaction S-methyl-5'-thioadenosine + H2O = 5-(methylsulfanyl)-D-ribose + adenine. It carries out the reaction 5'-deoxyadenosine + H2O = 5-deoxy-D-ribose + adenine. It participates in amino-acid biosynthesis; L-methionine biosynthesis via salvage pathway; S-methyl-5-thio-alpha-D-ribose 1-phosphate from S-methyl-5'-thioadenosine (hydrolase route): step 1/2. Catalyzes the irreversible cleavage of the glycosidic bond in both 5'-methylthioadenosine (MTA) and S-adenosylhomocysteine (SAH/AdoHcy) to adenine and the corresponding thioribose, 5'-methylthioribose and S-ribosylhomocysteine, respectively. Also cleaves 5'-deoxyadenosine, a toxic by-product of radical S-adenosylmethionine (SAM) enzymes, into 5-deoxyribose and adenine. The sequence is that of 5'-methylthioadenosine/S-adenosylhomocysteine nucleosidase from Geobacillus thermodenitrificans (strain NG80-2).